A 176-amino-acid polypeptide reads, in one-letter code: Probable superoxide oxidase CybB (176 aa).

The next 4 helical transmembrane spans lie at 7–27, 44–64, 85–105, and 137–157; these read CLQIGIHWLVLLLVIIAWSSI, IHFSCGIAILVLMMTRILIQL, VGHWVIYLLFIALPIIGIAIL, and HLLLANMSYFVIGLHALAALL. Residues His13 and His45 each contribute to the heme b site. Residues His137 and His151 each contribute to the heme b site.

The protein belongs to the cytochrome b561 family. Heme b is required as a cofactor.

It localises to the cell inner membrane. It catalyses the reaction a ubiquinol + 2 O2 = 2 superoxide + a ubiquinone + 2 H(+). B-type di-heme cytochrome. Catalyzes the oxidation of superoxide to molecular oxygen and transfers the extracted electrons to ubiquinone through the two hemes. This Yersinia pestis protein is Probable superoxide oxidase CybB (cybB).